A 96-amino-acid polypeptide reads, in one-letter code: Xylulose kinase (96 aa).

71–72 is a substrate binding site; it reads QH.

It belongs to the FGGY kinase family.

The catalysed reaction is D-xylulose + ATP = D-xylulose 5-phosphate + ADP + H(+). Catalyzes the phosphorylation of D-xylulose to D-xylulose 5-phosphate. This chain is Xylulose kinase, found in Arthrobacter sp. (strain NRRL B3728).